The following is a 324-amino-acid chain: Elongation factor Ts, mitochondrial (324 aa).

A mitochondrion-targeting transit peptide spans 1–44 (MSLLRSLRFFPVACTGRSARAVLLQPSQPWLTFHAGPSLSSAAS). N6-succinyllysine occurs at positions 75, 132, and 191. At Ser-269 the chain carries Phosphoserine.

The protein belongs to the EF-Ts family.

The protein localises to the mitochondrion. Associates with the EF-Tu.GDP complex and induces the exchange of GDP to GTP. It remains bound to the aminoacyl-tRNA.EF-Tu.GTP complex up to the GTP hydrolysis stage on the ribosome. The protein is Elongation factor Ts, mitochondrial (Tsfm) of Mus musculus (Mouse).